Consider the following 394-residue polypeptide: Formate-dependent phosphoribosylglycinamide formyltransferase (394 aa).

N(1)-(5-phospho-beta-D-ribosyl)glycinamide is bound by residues 21–22 (EL) and Glu-81. Residues Arg-113, Lys-154, 159 to 164 (SSGKGQ), 194 to 197 (EEFI), and Glu-202 each bind ATP. The region spanning 118–307 (RLAAEELGLP…QFELHVRAIL (190 aa)) is the ATP-grasp domain. 2 residues coordinate Mg(2+): Glu-266 and Glu-278. Residues Asp-285, Lys-355, and 362–363 (RR) each bind N(1)-(5-phospho-beta-D-ribosyl)glycinamide.

This sequence belongs to the PurK/PurT family. As to quaternary structure, homodimer.

It carries out the reaction N(1)-(5-phospho-beta-D-ribosyl)glycinamide + formate + ATP = N(2)-formyl-N(1)-(5-phospho-beta-D-ribosyl)glycinamide + ADP + phosphate + H(+). It functions in the pathway purine metabolism; IMP biosynthesis via de novo pathway; N(2)-formyl-N(1)-(5-phospho-D-ribosyl)glycinamide from N(1)-(5-phospho-D-ribosyl)glycinamide (formate route): step 1/1. Its function is as follows. Involved in the de novo purine biosynthesis. Catalyzes the transfer of formate to 5-phospho-ribosyl-glycinamide (GAR), producing 5-phospho-ribosyl-N-formylglycinamide (FGAR). Formate is provided by PurU via hydrolysis of 10-formyl-tetrahydrofolate. The sequence is that of Formate-dependent phosphoribosylglycinamide formyltransferase from Pelobacter propionicus (strain DSM 2379 / NBRC 103807 / OttBd1).